The chain runs to 345 residues: D-fructose 1,6-bisphosphatase class 2/sedoheptulose 1,7-bisphosphatase (345 aa).

Positions 33, 57, 97, and 100 each coordinate Mn(2+). Substrate contacts are provided by residues 100–102 (EGT), Tyr131, 176–178 (RPR), and 198–200 (DGD). Glu225 is a Mn(2+) binding site.

Belongs to the FBPase class 2 family. As to quaternary structure, homotetramer. Requires Mn(2+) as cofactor.

It catalyses the reaction beta-D-fructose 1,6-bisphosphate + H2O = beta-D-fructose 6-phosphate + phosphate. The enzyme catalyses D-sedoheptulose 1,7-bisphosphate + H2O = D-sedoheptulose 7-phosphate + phosphate. Its pathway is carbohydrate biosynthesis; Calvin cycle. Functionally, catalyzes the hydrolysis of fructose 1,6-bisphosphate (Fru 1,6-P2) and sedoheptulose 1,7-bisphosphate (Sed 1,7-P2) to fructose 6-phosphate and sedoheptulose 7-phosphate, respectively. This Trichodesmium erythraeum (strain IMS101) protein is D-fructose 1,6-bisphosphatase class 2/sedoheptulose 1,7-bisphosphatase.